The primary structure comprises 1394 residues: MSISKYFTPVADGSLTFNGANIQFGADAQGESKKSYDAEDSMPNPANQLNDITFQAEAGEMVLVLGYPTSTLFKTLFHGKTSLSYSPPGSIKFKNNEFKSFSEKCPHQIIYNNEQDVHFPFLTVEQTIDFALSCKFDIPKGERDQIRNELLREFGLSHVLKTIVGNDFFRGVSGGERKRISIIETFIANGSVYLWDNSTKGLDSATALDFLEILRKMAKATRSVNLVRISQASDKIVDKFDKILMLSDSYQLFYGTVDECLTYFRDTLGIEKDPNDCIIEYLTSILNFQFKNKNLGNLSNSSSASVLKTATGEVTKYTYNSDFDLYDQWKHSSYYRNIKQQIQGSSIDDSIKEVDPSDVSPIFNIPLKKQLLFCTKRAFQRSLGDKAYMTAQFISVVIQSLVIGSLFYEIPLTTIGSYSRGSLTFFSILFFTFLSLADMPIAFQRQPVVKKQSQLHFYTNWVETLSTTVFDYCFKLCLVIVFSIILYFLAHLQYKAARFFIFLLFLSFYNFCMVSLFALTTLVAPTISVANLFAGILLLAIAMYASYVIYLKNMHPWFVWIAYLNPAMYAMEAILSNELYNLKLDCSETIVPRGPTYNDVPFSHKACAWQGATLGNDYVRGRDYLKQGLSYTYHHVWRNFGIIIGFLVFFIACTLFASQYIKPYFNKDEIERNNSRLTRWLPFLNKKRGTRSSARNDSKYVGIPKSHSVSSSSSSLSAVPYQISPSNKEMALNDYNEQPITETVETQKHIISWKNINYTVGTKKLINNASGFISSGLTALMGESGAGKTTLLNVLSQRVETGVVSGEILIDGHPLTDEDAFKRSIGFVQQQDLHLDLLSVKESLEISCLLRGDGDRAYLDTVSNLLKLPSDILVADLNPTQRKLLSIGVELVTKPSLLLFLDEPTSGLDAEAALTIVKFLKQLSLQGQAIFCTIHQPSKSVISHFDNIFLLKRGGECVFFGPMDDACGYFMSHDNTLVYDKEHDNPADFVIDAVGNSNSSAGKDTAEEALTLNKEAIDWSALWESSVEKKLVKKETARLEDDARASGVDYTTSLWKQPSYLQQLALITRRQYICTKRDMTYVMAKYCLNGGAGLFIGFSFWHIKHNIIGLQDSIFFCFMALCVSSPLINQIQDKALKTKEVYVAREARSNTYHWTVLLLSQSIIELPLALTSSTLFFVCAFFSCGFNNAGWSAGVFFLNYMLFAAYYSTLGLWLIYTAPNLQTAAVFVAFIYSFTASFCGVMQPYSLFPTFWKFMYRVSPYTYFVETFVSILLHNWEIKCDMSEMVPGQPLTGQSCGQFMEAFIEEYGGYLHNKNTFTVCAYCTYTVGDDFLKNENMSYDHVWRNFGIEWAFVGFNFFAMFAGYYLTYVARIWPKVFKIITKVIPHRGKKPVQN.

The Cytoplasmic portion of the chain corresponds to 1 to 420; it reads MSISKYFTPV…PLTTIGSYSR (420 aa). Residues 33 to 273 form the ABC transporter 1 domain; that stretch reads KKSYDAEDSM…FRDTLGIEKD (241 aa). 6 helical membrane passes run 421–443, 468–490, 497–519, 529–551, 558–575, and 636–658; these read GSLTFFSILFFTFLSLADMPIAF, TVFDYCFKLCLVIVFSIILYFLA, ARFFIFLLFLSFYNFCMVSLFAL, VANLFAGILLLAIAMYASYVIYL, FVWIAYLNPAMYAMEAIL, and VWRNFGIIIGFLVFFIACTLFAS. At 659–1080 the chain is on the cytoplasmic side; the sequence is QYIKPYFNKD…QYICTKRDMT (422 aa). In terms of domain architecture, ABC transporter 2 spans 751–978; the sequence is ISWKNINYTV…YFMSHDNTLV (228 aa). 782–789 is an ATP binding site; that stretch reads GESGAGKT. Transmembrane regions (helical) follow at residues 1081 to 1103, 1107 to 1129, 1156 to 1178, 1193 to 1215, 1224 to 1246, and 1346 to 1368; these read YVMAKYCLNGGAGLFIGFSFWHI, IIGLQDSIFFCFMALCVSSPLIN, VLLLSQSIIELPLALTSSTLFFV, AGVFFLNYMLFAAYYSTLGLWLI, AAVFVAFIYSFTASFCGVMQPYS, and FGIEWAFVGFNFFAMFAGYYLTY. The Cytoplasmic portion of the chain corresponds to 1369–1394; the sequence is VARIWPKVFKIITKVIPHRGKKPVQN.

This sequence belongs to the ABC transporter superfamily. ABCG family. PDR (TC 3.A.1.205) subfamily.

The protein resides in the membrane. Transporter involved in the uptake of sterol. The chain is ATP-dependent permease AUS1 (AUS1) from Saccharomyces cerevisiae (strain ATCC 204508 / S288c) (Baker's yeast).